Reading from the N-terminus, the 236-residue chain is Rho-related GTP-binding protein RhoV (236 aa).

The interval 1 to 27 (MPPRELSEAESSPLRSPTPPPGRGSAS) is disordered. S25 carries the post-translational modification Phosphoserine. GTP-binding positions include 38 to 45 (GDGAVGKS), 85 to 89 (DTAGQ), and 143 to 146 (TQAD). A lipid anchor (S-palmitoyl cysteine) is attached at C234.

Belongs to the small GTPase superfamily. Rho family. Interacts with PAK2. Mg(2+) serves as cofactor.

Its subcellular location is the cell membrane. The protein resides in the endosome membrane. Its function is as follows. Plays a role in the control of the actin cytoskeleton via activation of the JNK pathway. The sequence is that of Rho-related GTP-binding protein RhoV from Bos taurus (Bovine).